A 545-amino-acid polypeptide reads, in one-letter code: E3 ubiquitin-protein ligase ipaH9.8 (545 aa).

An interaction with target proteins region spans residues 1-242 (MLPINNNFSL…YHGPRIYFSM (242 aa)). LRR repeat units lie at residues 57-77 (NSDELRLDRLNLSSLPDNLPA), 78-99 (QITLLNVSYNQLTNLPELPVTL), 100-117 (KKLYSASNKLSELPVLPP), 118-139 (ALESLQVQHNELENLPALPDSL), 140-157 (LTMNISYNEIVSLPSLPL), 158-179 (ALKNLRATRNFLTELPAFSEGN), 182-203 (VVREYFFDRNQISHIPESILNL), and 205-228 (NECSIHISDNPLSSHALQALQRLT). The interval 243-250 (SDGQQNTL) is linker. Residues 251–545 (HRPLADAVTA…SENGSQLHHS (295 aa)) are E3 ubiquitin-protein ligase catalytic domain. Residues 253–545 (PLADAVTAWF…SENGSQLHHS (293 aa)) enclose the NEL domain. The active-site Glycyl thioester intermediate is the Cys-337.

This sequence belongs to the LRR-containing bacterial E3 ligase family. Also interacts with human and mouse U2AF1 (U2AF35). In terms of processing, ubiquitinated in the presence of host E1 ubiquitin-activating enzyme, E2 ubiquitin-conjugating enzyme and ubiquitin.

The protein localises to the secreted. It is found in the host cytoplasm. The protein resides in the host nucleus. It catalyses the reaction S-ubiquitinyl-[E2 ubiquitin-conjugating enzyme]-L-cysteine + [acceptor protein]-L-lysine = [E2 ubiquitin-conjugating enzyme]-L-cysteine + N(6)-ubiquitinyl-[acceptor protein]-L-lysine.. Exists in an autoinhibited state in the absence of substrate protein, due to interactions of the leucine-rich repeats with NEL domain. Is activated upon binding to a substrate protein. Functionally, effector E3 ubiquitin ligase that interferes with host's ubiquitination pathway and modulates the acute inflammatory responses, thus facilitating bacterial colonization within the host cell. Interacts with IKBKG (NEMO) and TNIP1 (ABIN-1), a ubiquitin-binding adapter protein, which results in TNIP1-dependent 'Lys-27'-linked polyubiquitination of IKBKG. Consequently, polyubiquitinated IKBKG undergoes proteasome-dependent degradation, which perturbs NF-kappa-B activation during bacterial infection. Mediates polyubiquitination of host U2AF1, leading to its proteasomal degradation. Catalyzes 'Lys-48'-linked polyubiquitination and subsequent degradation of a subset of host guanylate-binding proteins (GBP1, GBP2, GBP4 and GBP6), thereby suppressing host cell defense. In contrast, host GBP3 and GBP7 are not ubiquitinated by IpaH9.8. Uses UBE2D2 (UBCH5B) as an E2 ubiquitin-conjugating enzyme. This Shigella boydii serotype 4 (strain Sb227) protein is E3 ubiquitin-protein ligase ipaH9.8 (ipaH9.8).